We begin with the raw amino-acid sequence, 386 residues long: Pepsin A (386 aa).

The first 15 residues, 1 to 15 (MKWLLLLSLVALSEC), serve as a signal peptide directing secretion. A propeptide spans 16-60 (YIYKVPLVKKKSLRKNLMEQGLLQDYLKTHSINPASKYLKEAASM) (activation peptide). Positions 74-383 (YFGTIGIGTP…DRGNNQVGLA (310 aa)) constitute a Peptidase A1 domain. Residue D92 is part of the active site. 2 disulfide bridges follow: C105-C110 and C266-C270. D275 is a catalytic residue. C309 and C342 are joined by a disulfide.

Belongs to the peptidase A1 family.

It is found in the secreted. It carries out the reaction Preferential cleavage: hydrophobic, preferably aromatic, residues in P1 and P1' positions. Cleaves 1-Phe-|-Val-2, 4-Gln-|-His-5, 13-Glu-|-Ala-14, 14-Ala-|-Leu-15, 15-Leu-|-Tyr-16, 16-Tyr-|-Leu-17, 23-Gly-|-Phe-24, 24-Phe-|-Phe-25 and 25-Phe-|-Tyr-26 bonds in the B chain of insulin.. Its function is as follows. Shows particularly broad specificity; although bonds involving phenylalanine and leucine are preferred, many others are also cleaved to some extent. The sequence is that of Pepsin A (PGA) from Rhinolophus ferrumequinum (Greater horseshoe bat).